The chain runs to 488 residues: Ribulose bisphosphate carboxylase large chain 1 (488 aa).

Residues N128 and T178 each coordinate substrate. The active-site Proton acceptor is the K180. K182 is a binding site for substrate. The Mg(2+) site is built by K206, D208, and E209. N6-carboxylysine is present on K206. H298 (proton acceptor) is an active-site residue. Residues R299, H331, and S383 each coordinate substrate.

Belongs to the RuBisCO large chain family. Type I subfamily. As to quaternary structure, heterohexadecamer of 8 large chains and 8 small chains. Requires Mg(2+) as cofactor.

It carries out the reaction 2 (2R)-3-phosphoglycerate + 2 H(+) = D-ribulose 1,5-bisphosphate + CO2 + H2O. The catalysed reaction is D-ribulose 1,5-bisphosphate + O2 = 2-phosphoglycolate + (2R)-3-phosphoglycerate + 2 H(+). RuBisCO catalyzes two reactions: the carboxylation of D-ribulose 1,5-bisphosphate, the primary event in carbon dioxide fixation, as well as the oxidative fragmentation of the pentose substrate. Both reactions occur simultaneously and in competition at the same active site. The sequence is that of Ribulose bisphosphate carboxylase large chain 1 from Methylibium petroleiphilum (strain ATCC BAA-1232 / LMG 22953 / PM1).